We begin with the raw amino-acid sequence, 65 residues long: MPKMKTKKSAAKRFVVRPGGTVKRGQAFKRHILTKKTTKNKRHLRGSTAVHDADMNSVRAMLPFA.

It belongs to the bacterial ribosomal protein bL35 family.

This is Large ribosomal subunit protein bL35 from Paraburkholderia phytofirmans (strain DSM 17436 / LMG 22146 / PsJN) (Burkholderia phytofirmans).